Here is a 108-residue protein sequence, read N- to C-terminus: UPF0060 membrane protein SH0717 (108 aa).

4 consecutive transmembrane segments (helical) span residues 5–25 (IFIF…IWLW), 31–51 (SSWL…IATF), 60–80 (VYAA…YIVD), and 86–106 (KYDL…ILPS).

The protein belongs to the UPF0060 family.

It localises to the cell membrane. The sequence is that of UPF0060 membrane protein SH0717 from Staphylococcus haemolyticus (strain JCSC1435).